The following is a 677-amino-acid chain: uncharacterized protein (677 aa).

A disordered region spans residues 1-87 (MGRHSKPDPE…PTGAEPIAAA (87 aa)). Positions 17–29 (SDGHAAEQQHWED) are enriched in basic and acidic residues. Low complexity predominate over residues 51–64 (GHYSAVGGYSASGS). Transmembrane regions (helical) follow at residues 115–135 (VSIGVIVALVAVVVMVAGVIL), 192–212 (VAVAVTSAGSDAVINGFIGKW), 313–333 (EAVAAASAPAGAPATAGIGAV), and 474–494 (ATLADTMVTASAGVAATIMLD).

Its subcellular location is the cell membrane. This is an uncharacterized protein from Mycobacterium tuberculosis (strain CDC 1551 / Oshkosh).